Here is a 634-residue protein sequence, read N- to C-terminus: ABC transporter B family member 29, chloroplastic (634 aa).

The N-terminal 51 residues, Met1–Arg51, are a transit peptide targeting the chloroplast. 6 helical membrane-spanning segments follow: residues Thr75–Pro95, Leu119–Leu139, Leu195–Val215, Ala219–Gly239, Ile307–Ala327, and Ser330–Val350. The ABC transmembrane type-1 domain maps to Leu77 to Gln362. The 238-residue stretch at Val396–Val633 folds into the ABC transporter domain. Gly430–Thr437 is a binding site for ATP.

This sequence belongs to the ABC transporter superfamily. ABCB family. Multidrug resistance exporter (TC 3.A.1.201) subfamily.

The protein localises to the plastid. It localises to the chloroplast membrane. This chain is ABC transporter B family member 29, chloroplastic (ABCB29), found in Arabidopsis thaliana (Mouse-ear cress).